The following is a 713-amino-acid chain: Probable muscarinic acetylcholine receptor gar-1 (713 aa).

Over 1-20 (MPNYTVPPDPADTSWDSPYS) the chain is Extracellular. N-linked (GlcNAc...) asparagine glycosylation occurs at Asn3. The helical transmembrane segment at 21–41 (IPVQIVVWIIIIVLSLETIIG) threads the bilayer. Residues 42–66 (NAMVVMAYRIERNISKQVSNRYIVS) are Cytoplasmic-facing. A helical transmembrane segment spans residues 67-87 (LAISDLIIGIEGFPFFTVYVL). The Extracellular segment spans residues 88-101 (NGDRWPLGWVACQT). Residues Cys99 and Cys180 are joined by a disulfide bond. The chain crosses the membrane as a helical span at residues 102 to 122 (WLFLDYTLCLVSILTVLLITA). Residues 123 to 144 (DRYLSVCHTAKYLKWQSPTKTQ) are Cytoplasmic-facing. A helical transmembrane segment spans residues 145-165 (LLIVMSWLLPAIIFGIMIYGW). Over 166–189 (QAMTGQSTSMSGAECSAPFLSNPY) the chain is Extracellular. A helical membrane pass occupies residues 190–210 (VNMGMYVAYYWTTLVAMLILY). Over 211–633 (KGIHQAAKNL…QTKAEKRAHK (423 aa)) the chain is Cytoplasmic. Disordered regions lie at residues 256-350 (KEKA…SRRC), 381-403 (SRYS…VEKA), 427-475 (KNTD…KQAE), and 515-585 (LIRR…TDTF). 2 stretches are compositionally biased toward polar residues: residues 266–275 (SGYTSNQAGD) and 287–315 (PETS…NDQN). 2 stretches are compositionally biased toward basic and acidic residues: residues 320 to 333 (EEER…RESN) and 393 to 403 (HENDEKEVEKA). Residues 429–439 (TDSNNDSDTTS) are compositionally biased toward low complexity. Over residues 444–457 (RSRKYKKNKRPRSS) the composition is skewed to basic residues. Over residues 557–571 (LTVNNENRGETSSQP) the composition is skewed to polar residues. A helical transmembrane segment spans residues 634 to 656 (AFRTITFIVGFFAILWSPYYIMA). Topologically, residues 657–670 (TVYGFCKGECIPSF) are extracellular. Residues 671 to 693 (LYTLSYYMCYLNSSGNPFAYALA) traverse the membrane as a helical segment. The Cytoplasmic segment spans residues 694–713 (NRQFRSAFMRMFRGNFNKVA).

The protein belongs to the G-protein coupled receptor 1 family. Muscarinic acetylcholine receptor subfamily. As to expression, expressed in head region of the larva. In adults, expression is seen in the periventricularis magnocellularis (PVM) neuron.

The protein resides in the cell membrane. Functionally, the muscarinic acetylcholine receptor mediates various cellular responses, including inhibition of adenylate cyclase, breakdown of phosphoinositides and modulation of potassium channels through the action of G proteins. Primary transducing effect is Pi turnover. The protein is Probable muscarinic acetylcholine receptor gar-1 (gar-1) of Caenorhabditis elegans.